Reading from the N-terminus, the 280-residue chain is Small ribosomal subunit protein uS15m (280 aa).

Belongs to the universal ribosomal protein uS15 family. In terms of assembly, component of the mitochondrial ribosome small subunit (28S) which comprises a 12S rRNA and about 30 distinct proteins. In terms of tissue distribution, expressed in anterior and posterior midgut primordia in stage 11 embryos. In stage 13 embryos, expression is high in the developing midgut and hindgut. In stage 16 embryos, expression is elevated in the midgut, hindgut, and in a small region that will give rise to pharyngeal muscles and to the stomatogastric nervous system. In larvae, expression is predominant in the gut, and head, presumably in pharyngeal muscles.

The protein localises to the mitochondrion. Functionally, essential for gut mitochondrial activity. Might be involved in tissue specific growth factor production. This Drosophila melanogaster (Fruit fly) protein is Small ribosomal subunit protein uS15m (bonsai).